The sequence spans 227 residues: PKHD-type hydroxylase Mnod_1077 (227 aa).

Positions 78–178 (RVLPPLFNRY…RWSAFFWSQS (101 aa)) constitute a Fe2OG dioxygenase domain. Fe cation is bound by residues His-96, Asp-98, and His-159. Arg-169 lines the 2-oxoglutarate pocket.

It depends on Fe(2+) as a cofactor. The cofactor is L-ascorbate.

This is PKHD-type hydroxylase Mnod_1077 from Methylobacterium nodulans (strain LMG 21967 / CNCM I-2342 / ORS 2060).